The primary structure comprises 872 residues: Oxidation resistance protein 1 (872 aa).

The segment at 1-86 (MSVTNLSWLK…QKKTLDKKDG (86 aa)) is disordered. The segment covering 63–86 (RRSELKRFYTIDTGQKKTLDKKDG) has biased composition (basic and acidic residues). Ser-90 is modified (phosphoserine). The 44-residue stretch at 98 to 141 (VKYTVESRDSLNSIALKFDTTPNELVQLNKLFSRAVVTGQVLYV) folds into the LysM domain. A Phosphothreonine modification is found at Thr-118. Low complexity predominate over residues 150–168 (VESSPSLSPISPLSPTSSE). Positions 150-187 (VESSPSLSPISPLSPTSSEAELEKTTTPDVVHPKEPTP) are disordered. Over residues 170 to 184 (ELEKTTTPDVVHPKE) the composition is skewed to basic and acidic residues. A phosphoserine mark is found at Ser-201, Ser-202, and Ser-204. Residues 212-268 (EKFLKINCRYITSSKGTVSGVLLVTPNNIMFDPHKTDPLVQENGCEEYGIMCPMEEV) enclose the GRAM domain. Phosphoserine is present on residues Ser-294, Ser-334, and Ser-336. Residues 314–338 (SRIRDAANDSASTAPRSTEESLSED) form a disordered region. A Phosphothreonine modification is found at Thr-341. Phosphoserine occurs at positions 346 and 496. The tract at residues 549–576 (RRHRLHKFLCLRVRKPMRKTFVSQASAT) is mediates oxidative antimutator activity. Residues 711 to 872 (HLLLPDQIIK…IQDIEIWAFK (162 aa)) form the TLDc domain.

Belongs to the OXR1 family.

It is found in the mitochondrion. Its function is as follows. May be involved in protection from oxidative damage. This chain is Oxidation resistance protein 1 (OXR1), found in Bos taurus (Bovine).